The following is a 226-amino-acid chain: Probable functional amyloid protease FapD (226 aa).

Residues 1 to 18 form the signal peptide; the sequence is MRRATLCLLLLLAGPSWA. Residues 50–180 enclose the Peptidase C39 domain; the sequence is QKTDFSCGAA…AGWNGIVFAV (131 aa). The active site involves Cys-56.

The protein belongs to the FapD family.

The protein resides in the periplasm. In terms of biological role, probable cysteine protease that is involved in processing fibril precursors. Upon overexpression of the endogenous six-gene locus (fapA-fapF) in situ, cells form large clumps during liquid growth, make large amounts of biofilm and produce amyloid fibrils. Expression of the 6 gene operon in E.coli strain BL21(DE3) induces flocculation and biofilm formation with copious extracellular fibrils. The polypeptide is Probable functional amyloid protease FapD (Pseudomonas fluorescens).